We begin with the raw amino-acid sequence, 848 residues long: Translation initiation factor IF-2 (848 aa).

The tract at residues 106-150 (TEQQTEAENSTNINLSEQTIKNNSHQSSSNTIETTQEKKQNDDLS) is disordered. Over residues 112–139 (AENSTNINLSEQTIKNNSHQSSSNTIET) the composition is skewed to polar residues. The tr-type G domain maps to 347-517 (PRAPIITVMG…LLLADMLELK (171 aa)). The interval 356-363 (GHVDHGKT) is G1. 356-363 (GHVDHGKT) provides a ligand contact to GTP. The interval 381–385 (GITQH) is G2. Residues 403–406 (DTPG) are G3. GTP contacts are provided by residues 403 to 407 (DTPGH) and 457 to 460 (NKID). The G4 stretch occupies residues 457–460 (NKID). The interval 493–495 (SAL) is G5.

Belongs to the TRAFAC class translation factor GTPase superfamily. Classic translation factor GTPase family. IF-2 subfamily.

It localises to the cytoplasm. In terms of biological role, one of the essential components for the initiation of protein synthesis. Protects formylmethionyl-tRNA from spontaneous hydrolysis and promotes its binding to the 30S ribosomal subunits. Also involved in the hydrolysis of GTP during the formation of the 70S ribosomal complex. The protein is Translation initiation factor IF-2 of Orientia tsutsugamushi (strain Boryong) (Rickettsia tsutsugamushi).